A 332-amino-acid chain; its full sequence is 2,3-diketo-L-gulonate reductase (332 aa).

Catalysis depends on H44, which acts as the Proton donor. Residues 168–174 (ITMVDMS), 224–225 (WK), and 304–306 (GHE) contribute to the NAD(+) site.

This sequence belongs to the LDH2/MDH2 oxidoreductase family. DlgD subfamily. Homodimer.

The protein resides in the cytoplasm. The catalysed reaction is 3-dehydro-L-gulonate + NAD(+) = 2,3-dioxo-L-gulonate + NADH + H(+). It catalyses the reaction 3-dehydro-L-gulonate + NADP(+) = 2,3-dioxo-L-gulonate + NADPH + H(+). In terms of biological role, catalyzes the reduction of 2,3-diketo-L-gulonate in the presence of NADH, to form 3-keto-L-gulonate. In Pasteurella multocida (strain Pm70), this protein is 2,3-diketo-L-gulonate reductase.